A 246-amino-acid chain; its full sequence is tRNA (guanine-N(1)-)-methyltransferase (246 aa).

S-adenosyl-L-methionine contacts are provided by residues glycine 113 and 132–137 (LGDFVV).

It belongs to the RNA methyltransferase TrmD family. As to quaternary structure, homodimer.

Its subcellular location is the cytoplasm. The catalysed reaction is guanosine(37) in tRNA + S-adenosyl-L-methionine = N(1)-methylguanosine(37) in tRNA + S-adenosyl-L-homocysteine + H(+). Its function is as follows. Specifically methylates guanosine-37 in various tRNAs. The chain is tRNA (guanine-N(1)-)-methyltransferase from Latilactobacillus sakei subsp. sakei (strain 23K) (Lactobacillus sakei subsp. sakei).